Reading from the N-terminus, the 736-residue chain is Oxysterol-binding protein-related protein 9 (736 aa).

Ala2 carries the N-acetylalanine modification. The PH domain maps to 2–99; that stretch reads ASIMEGPLSK…WIHALEETIL (98 aa). The tract at residues 231 to 367 is disordered; the sequence is KSEQRPSSLP…DRDDDAEAGS (137 aa). The segment covering 253 to 290 has biased composition (low complexity); sequence TPTPNSTGSGHSPPSSSLTSPSHVNLSPNTVPEFSYSS. 5 positions are modified to phosphoserine: Ser306, Ser324, Ser325, Ser326, and Ser329. Composition is skewed to polar residues over residues 314 to 329 and 336 to 347; these read SSGS…SGNS and TESLNSSLSNGT. Ser611 carries the phosphoserine modification.

This sequence belongs to the OSBP family. Heterodimer with OSBPL11. Interacts with OSBPL10. In terms of tissue distribution, widely expressed.

It is found in the late endosome membrane. The protein resides in the golgi apparatus. It localises to the trans-Golgi network membrane. The enzyme catalyses a 1,2-diacyl-sn-glycero-3-phospho-(1D-myo-inositol 4-phosphate)(out) + a 1,2-diacyl-sn-glycero-3-phospho-L-serine(in) = a 1,2-diacyl-sn-glycero-3-phospho-(1D-myo-inositol 4-phosphate)(in) + a 1,2-diacyl-sn-glycero-3-phospho-L-serine(out). Interacts with OSBPL11 to function as lipid transfer proteins. Together they form a heterodimer that localizes at the ER-trans-Golgi membrane contact sites, and exchanges phosphatidylserine (1,2-diacyl-sn-glycero-3-phospho-L-serine, PS) for phosphatidylinositol-4-phosphate (1,2-diacyl-sn-glycero-3-phospho-(1D-myo-inositol 4-phosphate), PI(4)P) between the two organelles, a step that is critical for sphingomyelin synthesis in the Golgi complex. This chain is Oxysterol-binding protein-related protein 9 (OSBPL9), found in Homo sapiens (Human).